The sequence spans 193 residues: Leucyl/phenylalanyl-tRNA--protein transferase (193 aa).

This sequence belongs to the L/F-transferase family.

The protein resides in the cytoplasm. It carries out the reaction N-terminal L-lysyl-[protein] + L-leucyl-tRNA(Leu) = N-terminal L-leucyl-L-lysyl-[protein] + tRNA(Leu) + H(+). The enzyme catalyses N-terminal L-arginyl-[protein] + L-leucyl-tRNA(Leu) = N-terminal L-leucyl-L-arginyl-[protein] + tRNA(Leu) + H(+). The catalysed reaction is L-phenylalanyl-tRNA(Phe) + an N-terminal L-alpha-aminoacyl-[protein] = an N-terminal L-phenylalanyl-L-alpha-aminoacyl-[protein] + tRNA(Phe). Its function is as follows. Functions in the N-end rule pathway of protein degradation where it conjugates Leu, Phe and, less efficiently, Met from aminoacyl-tRNAs to the N-termini of proteins containing an N-terminal arginine or lysine. The polypeptide is Leucyl/phenylalanyl-tRNA--protein transferase (Akkermansia muciniphila (strain ATCC BAA-835 / DSM 22959 / JCM 33894 / BCRC 81048 / CCUG 64013 / CIP 107961 / Muc)).